A 526-amino-acid chain; its full sequence is Anthranilate synthase component 1 (526 aa).

L-tryptophan-binding positions include S40 and 304–306 (PYM). 341–342 (GT) is a binding site for chorismate. A Mg(2+)-binding site is contributed by E374. Residues Y461, R481, 495–497 (GAG), and G497 each bind chorismate. Residue E510 coordinates Mg(2+).

Belongs to the anthranilate synthase component I family. As to quaternary structure, heterotetramer consisting of two non-identical subunits: a beta subunit (TrpG) and a large alpha subunit (TrpE). Mg(2+) serves as cofactor.

The catalysed reaction is chorismate + L-glutamine = anthranilate + pyruvate + L-glutamate + H(+). Its pathway is amino-acid biosynthesis; L-tryptophan biosynthesis; L-tryptophan from chorismate: step 1/5. Feedback inhibited by tryptophan. Its function is as follows. Part of a heterotetrameric complex that catalyzes the two-step biosynthesis of anthranilate, an intermediate in the biosynthesis of L-tryptophan. In the first step, the glutamine-binding beta subunit (TrpG) of anthranilate synthase (AS) provides the glutamine amidotransferase activity which generates ammonia as a substrate that, along with chorismate, is used in the second step, catalyzed by the large alpha subunit of AS (TrpE) to produce anthranilate. In the absence of TrpG, TrpE can synthesize anthranilate directly from chorismate and high concentrations of ammonia. This is Anthranilate synthase component 1 (trpE) from Buchnera aphidicola subsp. Tetraneura caerulescens.